Here is a 90-residue protein sequence, read N- to C-terminus: MGRWICMYHTVPHARPSLADRRVFRIQPVTQFLATTTTFQHRASSEASYVPLEPGLLLLCCFYPIGNLILLVRLSLVLRNGSLVLPLSCV.

Residues 55–77 traverse the membrane as a helical segment; the sequence is GLLLLCCFYPIGNLILLVRLSLV. N80 is a glycosylation site (N-linked (GlcNAc...) asparagine).

It localises to the membrane. Cluster 41 protein; part of the gene cluster 41 that mediates the biosynthesis of an extracellular and diffusible metabolite that is able to stimulate colony sclerotial production. The sequence is that of Cluster 41 protein AFLA_114800 from Aspergillus flavus (strain ATCC 200026 / FGSC A1120 / IAM 13836 / NRRL 3357 / JCM 12722 / SRRC 167).